The following is a 183-amino-acid chain: Dual-action ribosomal maturation protein DarP (183 aa).

It belongs to the DarP family.

The protein resides in the cytoplasm. In terms of biological role, member of a network of 50S ribosomal subunit biogenesis factors which assembles along the 30S-50S interface, preventing incorrect 23S rRNA structures from forming. Promotes peptidyl transferase center (PTC) maturation. In Klebsiella pneumoniae (strain 342), this protein is Dual-action ribosomal maturation protein DarP.